A 139-amino-acid polypeptide reads, in one-letter code: Diuretic hormone 41 (139 aa).

Residues 1-20 (MMWWALWCAVVVAAGSGVAA) form the signal peptide. A propeptide spanning residues 21–79 (APAPDSLSPLDMVQMDSSAPDDETLYAMSPMAARYSAGAPWLYLLADMPRDSQTGSGRV) is cleaved from the precursor. Ile122 is modified (isoleucine amide).

It belongs to the sauvagine/corticotropin-releasing factor/urotensin I family. In terms of tissue distribution, expressed in corpora cardiaca (CC), corpora allata (CA), antennal lobe (AL) and gnathal ganglion (GNG) (at protein level). Expression in CC and CA detected in all animals, in GNG in most animals, expression in AL detected in few animals (at protein level).

It is found in the secreted. In terms of biological role, regulation of fluid secretion. In Agrotis ipsilon (Black cutworm moth), this protein is Diuretic hormone 41.